A 233-amino-acid chain; its full sequence is Ras-related protein Rab-20 (233 aa).

GTP contacts are provided by Gly17, Lys18, Thr19, Asp32, and Thr36. Thr19 is a binding site for Mg(2+). Short sequence motifs (switch) lie at residues 28 to 41 and 55 to 72; these read RRFPDTVSTVGGAF and DTAGREQFHGLGSLYCRG. The Mg(2+) site is built by Thr36 and Asp55. GTP contacts are provided by Gly58, Asn113, Lys114, and Asp116. The segment covering 119-130 has biased composition (basic and acidic residues); that stretch reads SERDTEGGEKEG. A disordered region spans residues 119–138; it reads SERDTEGGEKEGPASGKVGS. Residues Ala183 and Lys184 each contribute to the GTP site. 2 S-geranylgeranyl cysteine lipidation sites follow: Cys231 and Cys232.

Belongs to the small GTPase superfamily. Rab family. Mg(2+) is required as a cofactor. Present in a variety of tissues, but not in brain.

The protein localises to the cytoplasmic vesicle. Its subcellular location is the phagosome. It localises to the phagosome membrane. The protein resides in the golgi apparatus. It catalyses the reaction GTP + H2O = GDP + phosphate + H(+). Its activity is regulated as follows. Regulated by guanine nucleotide exchange factors (GEFs) which promote the exchange of bound GDP for free GTP. Regulated by GTPase activating proteins (GAPs) which increase the GTP hydrolysis activity. Inhibited by GDP dissociation inhibitors (GDIs). Plays a role in apical endocytosis/recycling. Plays a role in the maturation and acidification of phagosomes that engulf pathogens, such as S.aureus and Mycobacterium. Plays a role in the fusion of phagosomes with lysosomes. The chain is Ras-related protein Rab-20 from Mus musculus (Mouse).